Here is a 91-residue protein sequence, read N- to C-terminus: Small ribosomal subunit protein uS19 (91 aa).

Belongs to the universal ribosomal protein uS19 family.

Its function is as follows. Protein S19 forms a complex with S13 that binds strongly to the 16S ribosomal RNA. This is Small ribosomal subunit protein uS19 from Pseudomonas fluorescens (strain Pf0-1).